Here is a 110-residue protein sequence, read N- to C-terminus: ATP synthase epsilon chain (110 aa).

The protein belongs to the ATPase epsilon chain family. F-type ATPases have 2 components, CF(1) - the catalytic core - and CF(0) - the membrane proton channel. CF(1) has five subunits: alpha(3), beta(3), gamma(1), delta(1), epsilon(1). CF(0) has three main subunits: a, b and c.

The protein resides in the cell inner membrane. In terms of biological role, produces ATP from ADP in the presence of a proton gradient across the membrane. This Rickettsia typhi (strain ATCC VR-144 / Wilmington) protein is ATP synthase epsilon chain.